Consider the following 214-residue polypeptide: ER lumen protein-retaining receptor (214 aa).

Residues Met1–Asn4 lie on the Lumenal side of the membrane. A helical transmembrane segment spans residues Leu5 to Thr23. At Lys24–Arg37 the chain is on the cytoplasmic side. A helical transmembrane segment spans residues Ser38–Tyr55. Residues Asn56–Thr63 are Lumenal-facing. The chain crosses the membrane as a helical span at residues Ile64 to Lys82. The Cytoplasmic portion of the chain corresponds to Arg83–Trp98. A helical membrane pass occupies residues Tyr99 to Thr112. The Lumenal segment spans residues Glu113–Glu119. Residues Ile120 to Leu139 traverse the membrane as a helical segment. Residues Leu140–Ser151 are Cytoplasmic-facing. Residues Gln152–Tyr170 traverse the membrane as a helical segment. At Arg171 to Pro181 the chain is on the lumenal side. A helical transmembrane segment spans residues Leu182–Ile202. Residues Lys203 to Pro214 are Cytoplasmic-facing.

Belongs to the ERD2 family.

The protein localises to the endoplasmic reticulum membrane. Functionally, required for the retention of luminal endoplasmic reticulum proteins. Determines the specificity of the luminal ER protein retention system. Also required for normal vesicular traffic through the Golgi. The protein is ER lumen protein-retaining receptor of Entamoeba histolytica (strain ATCC 30459 / HM-1:IMSS / ABRM).